A 347-amino-acid polypeptide reads, in one-letter code: MVSVEFLQELPKCEHHLHLEGTLEPDLLFPLAKRNDIILPEGFPKSVEELNEKYKKFRDLQDFLDYYYIGTNVLISEQDFFDLAWAYFKKVHKQGLVHAEVFYDPQSHTSRGISIETVTKGFQRACDKAFSEFGITSKLIMCLLRHIEPEECLKTIEEATPFIKDGTISALGLDSAEKPFPPHLFVECYGKAASLNKDLKLTAHAGEEGPAQFVSDALDLLQVTRIDHGINSQYDEELLDRLSRDQTMLTICPLSNVKLQVVQSVSELPLQKFLDRDVPFSLNSDDPAYFGGYILDVYTQVSKDFPHWDHETWGRIAKNAIKGSWCDDKRKNGLLSRVDEVVTKYSH.

The Zn(2+) site is built by His-16, His-18, and His-204. Residue Glu-207 is the Proton donor of the active site. Zn(2+) is bound at residue Asp-285. Asp-286 provides a ligand contact to substrate.

The protein belongs to the metallo-dependent hydrolases superfamily. Adenosine and AMP deaminases family. Adenine deaminase type 2 subfamily. Zn(2+) serves as cofactor. In terms of processing, probably ubiquitinated when cells enter quiescence in response to nutrient limitation, since it is specifically degraded via a process requiring the F-box protein SAF1 and components of the SKP1-Cullin-F-box complex.

The protein localises to the cytoplasm. It is found in the nucleus. The enzyme catalyses adenine + H2O + H(+) = hypoxanthine + NH4(+). Catalyzes the hydrolytic deamination of adenine to hypoxanthine. Plays an important role in the purine salvage pathway and in nitrogen catabolism. Also exhibits a low activity towards N(6)-substituted adenines that are commonly known as the plant hormones cytokinins. This is Adenine deaminase from Saccharomyces cerevisiae (strain ATCC 204508 / S288c) (Baker's yeast).